The chain runs to 180 residues: Large ribosomal subunit protein uL5 (180 aa).

The protein belongs to the universal ribosomal protein uL5 family. In terms of assembly, part of the 50S ribosomal subunit; part of the 5S rRNA/L5/L18/L25 subcomplex. Contacts the 5S rRNA and the P site tRNA. Forms a bridge to the 30S subunit in the 70S ribosome.

This is one of the proteins that bind and probably mediate the attachment of the 5S RNA into the large ribosomal subunit, where it forms part of the central protuberance. In the 70S ribosome it contacts protein S13 of the 30S subunit (bridge B1b), connecting the 2 subunits; this bridge is implicated in subunit movement. Contacts the P site tRNA; the 5S rRNA and some of its associated proteins might help stabilize positioning of ribosome-bound tRNAs. This chain is Large ribosomal subunit protein uL5, found in Mesoplasma florum (strain ATCC 33453 / NBRC 100688 / NCTC 11704 / L1) (Acholeplasma florum).